The sequence spans 236 residues: Ribosomal RNA large subunit methyltransferase E (236 aa).

5 residues coordinate S-adenosyl-L-methionine: glycine 76, tryptophan 78, aspartate 99, aspartate 115, and aspartate 140. The Proton acceptor role is filled by lysine 180.

This sequence belongs to the class I-like SAM-binding methyltransferase superfamily. RNA methyltransferase RlmE family.

The protein resides in the cytoplasm. The catalysed reaction is uridine(2552) in 23S rRNA + S-adenosyl-L-methionine = 2'-O-methyluridine(2552) in 23S rRNA + S-adenosyl-L-homocysteine + H(+). Specifically methylates the uridine in position 2552 of 23S rRNA at the 2'-O position of the ribose in the fully assembled 50S ribosomal subunit. This is Ribosomal RNA large subunit methyltransferase E from Rhodopseudomonas palustris (strain HaA2).